The chain runs to 96 residues: Protein Vpr (96 aa).

Residues 1-42 form a homooligomerization region; the sequence is MEQAPEDQGPQREPYNEWALELLEELKQEAVRHFPRPWLHNL. Phosphoserine; by host is present on residues serine 79, serine 94, and serine 96.

The protein belongs to the HIV-1 VPR protein family. As to quaternary structure, homooligomer, may form homodimer. Interacts with p6-gag region of the Pr55 Gag precursor protein through a (Leu-X-X)4 motif near the C-terminus of the P6gag protein. Interacts with host UNG. May interact with host RAD23A/HHR23A. Interacts with host VPRBP/DCAF1, leading to hijack the CUL4A-RBX1-DDB1-DCAF1/VPRBP complex, mediating ubiquitination of host proteins such as TERT and ZGPAT and arrest of the cell cycle in G2 phase. Phosphorylated on several residues by host. These phosphorylations regulate VPR activity for the nuclear import of the HIV-1 pre-integration complex.

The protein resides in the virion. Its subcellular location is the host nucleus. It localises to the host extracellular space. Its function is as follows. During virus replication, may deplete host UNG protein, and incude G2-M cell cycle arrest. Acts by targeting specific host proteins for degradation by the 26S proteasome, through association with the cellular CUL4A-DDB1 E3 ligase complex by direct interaction with host VPRPB/DCAF-1. Cell cycle arrest reportedly occurs within hours of infection and is not blocked by antiviral agents, suggesting that it is initiated by the VPR carried into the virion. Additionally, VPR induces apoptosis in a cell cycle dependent manner suggesting that these two effects are mechanistically linked. Detected in the serum and cerebrospinal fluid of AIDS patient, VPR may also induce cell death to bystander cells. In terms of biological role, during virus entry, plays a role in the transport of the viral pre-integration (PIC) complex to the host nucleus. This function is crucial for viral infection of non-dividing macrophages. May act directly at the nuclear pore complex, by binding nucleoporins phenylalanine-glycine (FG)-repeat regions. The polypeptide is Protein Vpr (Homo sapiens (Human)).